The chain runs to 114 residues: MTEVKLDFQKQGGLIPAIILDHTSKEVIMLAYLNEEAYQLTRTSGQMWYWSRSRQELWHKGATSGHYQTVKKITADCDQDTLLIEVDQLGAACHTGSKSCFFHIIWDEEDSKTD.

Asp76 lines the Mg(2+) pocket. Cys77 is a binding site for Zn(2+). Residues Asp78 and Asp80 each coordinate Mg(2+). Residues Cys93 and Cys100 each contribute to the Zn(2+) site.

The protein belongs to the PRA-CH family. In terms of assembly, homodimer. The cofactor is Mg(2+). It depends on Zn(2+) as a cofactor.

The protein localises to the cytoplasm. The enzyme catalyses 1-(5-phospho-beta-D-ribosyl)-5'-AMP + H2O = 1-(5-phospho-beta-D-ribosyl)-5-[(5-phospho-beta-D-ribosylamino)methylideneamino]imidazole-4-carboxamide. The protein operates within amino-acid biosynthesis; L-histidine biosynthesis; L-histidine from 5-phospho-alpha-D-ribose 1-diphosphate: step 3/9. Functionally, catalyzes the hydrolysis of the adenine ring of phosphoribosyl-AMP. This Streptococcus gordonii (strain Challis / ATCC 35105 / BCRC 15272 / CH1 / DL1 / V288) protein is Phosphoribosyl-AMP cyclohydrolase.